Reading from the N-terminus, the 875-residue chain is Protein translocase subunit SecA (875 aa).

Residues Q87, 105–109, and D512 contribute to the ATP site; that span reads GEGKT. Zn(2+) is bound by residues C860, C862, C871, and H872.

Belongs to the SecA family. As to quaternary structure, monomer and homodimer. Part of the essential Sec protein translocation apparatus which comprises SecA, SecYEG and auxiliary proteins SecDF-YajC and YidC. The cofactor is Zn(2+).

The protein resides in the cell inner membrane. It localises to the cytoplasm. It carries out the reaction ATP + H2O + cellular proteinSide 1 = ADP + phosphate + cellular proteinSide 2.. Functionally, part of the Sec protein translocase complex. Interacts with the SecYEG preprotein conducting channel. Has a central role in coupling the hydrolysis of ATP to the transfer of proteins into and across the cell membrane, serving both as a receptor for the preprotein-SecB complex and as an ATP-driven molecular motor driving the stepwise translocation of polypeptide chains across the membrane. The protein is Protein translocase subunit SecA of Buchnera aphidicola subsp. Acyrthosiphon pisum (strain 5A).